The primary structure comprises 382 residues: RNA binding protein fox-1 homolog 1-like (382 aa).

Disordered stretches follow at residues 34–79 (QEAG…AAHP) and 94–148 (GPQH…QPKR). Pro residues predominate over residues 49 to 65 (YAPPPSYPPPGQAPPTP). Residues 101–110 (ESITASNTDD) are compositionally biased toward polar residues. The 77-residue stretch at 147–223 (KRLHVSNIPF…RKIEVNNATA (77 aa)) folds into the RRM domain.

As to expression, expressed during muscle development in adaxial cells, somites, cardiac precursors, finbuds and jaw muscle cells.

It is found in the nucleus. Functionally, RNA-binding protein that regulates alternative splicing events by binding to 5'-GCAUG-3' elements. Regulates alternative splicing of tissue-specific exons. This chain is RNA binding protein fox-1 homolog 1-like (rbfox1l), found in Danio rerio (Zebrafish).